A 1826-amino-acid polypeptide reads, in one-letter code: Protein TIC 214 (1826 aa).

Transmembrane regions (helical) follow at residues 18–38 (IINS…FSIG), 67–87 (FITG…HLAL), 127–147 (LSIQ…HFIL), 175–195 (VGWL…LVWI), and 221–241 (IFSI…PSPI). The interval 250–308 (TEEGWESEEETDVEIETASETKGTKQEQEGSTEEDPSPSLFSEEKEDPDKIDETEEIRV) is disordered. Composition is skewed to acidic residues over residues 252 to 266 (EGWE…EIET) and 293 to 304 (EKEDPDKIDETE). Residues 774–794 (LILIIQSIFRKYILLPSLIIV) traverse the membrane as a helical segment. Residues 1032-1057 (TKGLMKEKNSNAKKRGSPNKTSFNRK) form a disordered region. A compositionally biased stretch (basic residues) spans 1042–1057 (NAKKRGSPNKTSFNRK). Residues 1081-1101 (FYLFITIFIKRIYIDIFVCII) form a helical membrane-spanning segment.

This sequence belongs to the TIC214 family. Part of the Tic complex.

It is found in the plastid. It localises to the chloroplast inner membrane. In terms of biological role, involved in protein precursor import into chloroplasts. May be part of an intermediate translocation complex acting as a protein-conducting channel at the inner envelope. In Daucus carota (Wild carrot), this protein is Protein TIC 214.